We begin with the raw amino-acid sequence, 670 residues long: UvrABC system protein B (670 aa).

In terms of domain architecture, Helicase ATP-binding spans 51 to 433 (DGLKKGEPFQ…SSRVVEQIIR (383 aa)). ATP is bound at residue 64–71 (GVTGSGKT). Residues 117–140 (YYDYYQPESYLPAKDQYIEKDAMI) carry the Beta-hairpin motif. The region spanning 453-612 (DVMQEIRKIV…IVPTTIRKPI (160 aa)) is the Helicase C-terminal domain. The 36-residue stretch at 631–666 (PNVIIELDAEMREAADRLDFERAIQVRELIKKLEKE) folds into the UVR domain.

Belongs to the UvrB family. As to quaternary structure, forms a heterotetramer with UvrA during the search for lesions. Interacts with UvrC in an incision complex.

Its subcellular location is the cytoplasm. Its function is as follows. The UvrABC repair system catalyzes the recognition and processing of DNA lesions. A damage recognition complex composed of 2 UvrA and 2 UvrB subunits scans DNA for abnormalities. Upon binding of the UvrA(2)B(2) complex to a putative damaged site, the DNA wraps around one UvrB monomer. DNA wrap is dependent on ATP binding by UvrB and probably causes local melting of the DNA helix, facilitating insertion of UvrB beta-hairpin between the DNA strands. Then UvrB probes one DNA strand for the presence of a lesion. If a lesion is found the UvrA subunits dissociate and the UvrB-DNA preincision complex is formed. This complex is subsequently bound by UvrC and the second UvrB is released. If no lesion is found, the DNA wraps around the other UvrB subunit that will check the other stand for damage. The sequence is that of UvrABC system protein B from Methanosarcina mazei (strain ATCC BAA-159 / DSM 3647 / Goe1 / Go1 / JCM 11833 / OCM 88) (Methanosarcina frisia).